A 643-amino-acid polypeptide reads, in one-letter code: Phosphatidylinositol-3,5-bisphosphate 3-phosphatase MTMR2 (643 aa).

2 stretches are compositionally biased toward polar residues: residues 1–12 (MEKSSSCESLGS) and 23–40 (DSLSSASTSHSENSVHTK). The disordered stretch occupies residues 1-56 (MEKSSSCESLGSQPAAARPPSVDSLSSASTSHSENSVHTKSASVVSSDSISTSADN). A phosphoserine mark is found at Ser6 and Ser9. Residues 41-55 (SASVVSSDSISTSAD) show a composition bias toward low complexity. A Phosphoserine modification is found at Ser58. In terms of domain architecture, GRAM spans 68–139 (NKLAEMEEPP…GVINRVEKIG (72 aa)). The region spanning 205-580 (GWKLYDPLLE…RHLELWVGYY (376 aa)) is the Myotubularin phosphatase domain. Residues Asn330, Asn355, and Ile356 each contribute to the a 1,2-diacyl-sn-glycero-3-phospho-(1D-myo-inositol-3,5-bisphosphate) site. Positions 330, 355, and 356 each coordinate a 1,2-diacyl-sn-glycero-3-phospho-(1D-myo-inositol-3-phosphate). The Phosphocysteine intermediate role is filled by Cys417. A 1,2-diacyl-sn-glycero-3-phospho-(1D-myo-inositol-3,5-bisphosphate)-binding residues include Ser418, Asp419, Gly420, Trp421, Asp422, Arg423, Arg459, and Arg463. Residues Ser418, Asp419, Gly420, Trp421, Asp422, and Arg423 each coordinate a 1,2-diacyl-sn-glycero-3-phospho-(1D-myo-inositol-3-phosphate). Residue Arg463 participates in a 1,2-diacyl-sn-glycero-3-phospho-(1D-myo-inositol-3-phosphate) binding. Residues 593 to 627 (IHNRYKELLAKRAELQKKVEELQREISNRSTSSSE) adopt a coiled-coil conformation. Residues 615 to 643 (QREISNRSTSSSERASSPAQCVTPVQTVV) form a disordered region. The span at 620-631 (NRSTSSSERASS) shows a compositional bias: low complexity. The span at 632 to 643 (PAQCVTPVQTVV) shows a compositional bias: polar residues.

This sequence belongs to the protein-tyrosine phosphatase family. Non-receptor class myotubularin subfamily. In terms of assembly, homodimer (via coiled-coil domain). Heterotetramer consisting of one MTMR2 dimer and one SBF2/MTMR13 dimer; specifically in peripheral nerves stabilizes SBF2/MTMR13 at the membranes and increases MTMR2 catalytic activity towards phosphatidylinositol 3,5-bisphosphate and to a lesser extent towards phosphatidylinositol 3-phosphate. Heterodimer with SBF1/MTMR5; acts as an adapter for the phosphatase MTMR2 to regulate MTMR2 catalytic activity and subcellular location. Heterodimer with MTMR12. Phosphorylation at Ser-58 decreases MTMR2 localization to endocytic vesicular structures.

The protein localises to the cytoplasm. Its subcellular location is the early endosome membrane. The protein resides in the perinuclear region. It localises to the cell projection. It is found in the axon. The protein localises to the endosome membrane. The enzyme catalyses a 1,2-diacyl-sn-glycero-3-phospho-(1D-myo-inositol-3,5-bisphosphate) + H2O = a 1,2-diacyl-sn-glycero-3-phospho-(1D-myo-inositol-5-phosphate) + phosphate. It catalyses the reaction a 1,2-diacyl-sn-glycero-3-phospho-(1D-myo-inositol-3-phosphate) + H2O = a 1,2-diacyl-sn-glycero-3-phospho-(1D-myo-inositol) + phosphate. The catalysed reaction is 1,2-dioctanoyl-sn-glycero-3-phospho-(1-D-myo-inositol-3-phosphate) + H2O = 1,2-dioctanoyl-sn-glycero-3-phospho-(1D-myo-inositol) + phosphate. It carries out the reaction 1,2-dioctanoyl-sn-glycero-3-phospho-(1D-myo-inositol-3,5-bisphosphate) + H2O = 1,2-dioctanoyl-sn-glycero-3-phospho-(1D-myo-inositol-5-phosphate) + phosphate. In terms of biological role, lipid phosphatase that specifically dephosphorylates the D-3 position of phosphatidylinositol 3-phosphate and phosphatidylinositol 3,5-bisphosphate, generating phosphatidylinositol and phosphatidylinositol 5-phosphate. Regulates the level of these phosphoinositides critical for various biological processes including autophagy initiation and autophagosome maturation. This Pongo abelii (Sumatran orangutan) protein is Phosphatidylinositol-3,5-bisphosphate 3-phosphatase MTMR2.